We begin with the raw amino-acid sequence, 438 residues long: Serine hydroxymethyltransferase (438 aa).

(6S)-5,6,7,8-tetrahydrofolate contacts are provided by residues Leu-135 and 139 to 141 (GHL). At Lys-244 the chain carries N6-(pyridoxal phosphate)lysine. A disordered region spans residues 361 to 383 (GVPNDPLPPVKTSGIRVGSPAGT).

It belongs to the SHMT family. Homodimer. Pyridoxal 5'-phosphate serves as cofactor.

Its subcellular location is the cytoplasm. The enzyme catalyses (6R)-5,10-methylene-5,6,7,8-tetrahydrofolate + glycine + H2O = (6S)-5,6,7,8-tetrahydrofolate + L-serine. Its pathway is one-carbon metabolism; tetrahydrofolate interconversion. The protein operates within amino-acid biosynthesis; glycine biosynthesis; glycine from L-serine: step 1/1. Its function is as follows. Catalyzes the reversible interconversion of serine and glycine with tetrahydrofolate (THF) serving as the one-carbon carrier. This reaction serves as the major source of one-carbon groups required for the biosynthesis of purines, thymidylate, methionine, and other important biomolecules. Also exhibits THF-independent aldolase activity toward beta-hydroxyamino acids, producing glycine and aldehydes, via a retro-aldol mechanism. In Rhizorhabdus wittichii (strain DSM 6014 / CCUG 31198 / JCM 15750 / NBRC 105917 / EY 4224 / RW1) (Sphingomonas wittichii), this protein is Serine hydroxymethyltransferase.